A 231-amino-acid polypeptide reads, in one-letter code: 7-cyano-7-deazaguanine synthase (231 aa).

8–18 contributes to the ATP binding site; it reads LSGGLDSATAA. Cys189, Cys197, Cys200, and Cys203 together coordinate Zn(2+).

It belongs to the QueC family. It depends on Zn(2+) as a cofactor.

It catalyses the reaction 7-carboxy-7-deazaguanine + NH4(+) + ATP = 7-cyano-7-deazaguanine + ADP + phosphate + H2O + H(+). Its pathway is purine metabolism; 7-cyano-7-deazaguanine biosynthesis. Catalyzes the ATP-dependent conversion of 7-carboxy-7-deazaguanine (CDG) to 7-cyano-7-deazaguanine (preQ(0)). This chain is 7-cyano-7-deazaguanine synthase, found in Synechococcus elongatus (strain ATCC 33912 / PCC 7942 / FACHB-805) (Anacystis nidulans R2).